Here is a 502-residue protein sequence, read N- to C-terminus: Lipoprotein LipO (502 aa).

The first 21 residues, 1-21 (MKIRMRKKWMALPLAAMMIAG), serve as a signal peptide directing secretion. Residue Cys-22 is the site of N-palmitoyl cysteine attachment. Cys-22 carries S-diacylglycerol cysteine lipidation.

Its subcellular location is the cell membrane. In Bacillus subtilis (strain 168), this protein is Lipoprotein LipO (lipO).